We begin with the raw amino-acid sequence, 457 residues long: MDRSLRNVLVVSFGFLLLFTAYGGLQSLQSSLYSEEGLGVTALSTLYGGMLLSSMFLPPLLIERLGCKGTIILSMCGYVAFSVGNFFASWYTLIPTSILLGLGAAPLWSAQCTYLTITGNTHAEKAGKRGKDMVNQYFGIFFLIFQSSGVWGNLISSLVFGQTPSQETLPEEQLTSCGASDCLMATTTTNSTQRPSQQLVYTLLGIYTGSGVLAVLMIAAFLQPIRDVQRESEGEKKSVPFWSTLLSTFKLYRDKRLCLLILLPLYSGLQQGFLSSEYTRSYVTCTLGIQFVGYVMICFSATDALCSVLYGKVSQYTGRAVLYVLGAVTHVSCMIALLLWRPRADHLAVFFVFSGLWGVADAVWQTQNNALYGVLFEKSKEAAFANYRLWEALGFVIAFGYSMFLCVHVKLYILLGVLSLTMVAYGLVECVESKNPIRPHAPGQVNQAEDEEIQTKM.

A run of 5 helical transmembrane segments spans residues Val8–Leu28, Ala42–Ile62, Leu65–Asn85, Phe86–Pro106, and Ile140–Phe160. A glycan (N-linked (GlcNAc...) asparagine) is linked at Asn190. 6 consecutive transmembrane segments (helical) span residues Thr202 to Leu222, Leu257 to Glu277, Phe291 to Gly311, Ala320 to Trp340, Ala344 to Trp364, and Phe395 to Leu415.

Belongs to the unc-93 family. In terms of tissue distribution, expressed in testis, small intestine, spleen, prostate and ovary.

Its subcellular location is the cell membrane. The sequence is that of Protein unc-93 homolog A (UNC93A) from Homo sapiens (Human).